Here is a 395-residue protein sequence, read N- to C-terminus: MAKEKFDRSKPHVNIGTIGHVDHGKTTLTAAITTVLAKKGLSELRSFDSIDNAPEEKERGITINTSHVEYQTANRHYAHVDCPGHADYVKNMVTGAAQMDGAIIVVAATDGPMPQTREHILLARQVNVPRLVVFMNKCDMVDDEEMLELVEMEMRELLSFYQFDGDNTPIIRGSALGALNGDAQWEDKVMELMEACDTWIPLPPREIDKPFLMPVEDVFSITGRGTVATGRIETGIVKVGEEVQIIGLGAAGKKSVVTGVEMFRKLLDQGEAGDNVGLLLRGIDKNEIKRGMVICHPGQVKEHSKFKAEVYILKKEEGGRHTPFHNKYRPQFYIRTLDVTGEITLPEGTEMVMPGDNVTIEVELIYPVACSVGLRFAIREGGRTVGAGQITELEN.

In terms of domain architecture, tr-type G spans 10-205; sequence KPHVNIGTIG…CDTWIPLPPR (196 aa). Residues 19–26 are G1; it reads GHVDHGKT. 19–26 provides a ligand contact to GTP; the sequence is GHVDHGKT. Threonine 26 contributes to the Mg(2+) binding site. The tract at residues 60–64 is G2; that stretch reads GITIN. The G3 stretch occupies residues 81–84; sequence DCPG. GTP contacts are provided by residues 81 to 85 and 136 to 139; these read DCPGH and NKCD. A G4 region spans residues 136–139; the sequence is NKCD. The tract at residues 174–176 is G5; the sequence is SAL.

This sequence belongs to the TRAFAC class translation factor GTPase superfamily. Classic translation factor GTPase family. EF-Tu/EF-1A subfamily. In terms of assembly, monomer.

Its subcellular location is the cytoplasm. It carries out the reaction GTP + H2O = GDP + phosphate + H(+). Functionally, GTP hydrolase that promotes the GTP-dependent binding of aminoacyl-tRNA to the A-site of ribosomes during protein biosynthesis. In Parabacteroides distasonis (strain ATCC 8503 / DSM 20701 / CIP 104284 / JCM 5825 / NCTC 11152), this protein is Elongation factor Tu.